Here is a 220-residue protein sequence, read N- to C-terminus: Deoxyribose-phosphate aldolase 1 (220 aa).

Aspartate 89 (proton donor/acceptor) is an active-site residue. The Schiff-base intermediate with acetaldehyde role is filled by lysine 151. The Proton donor/acceptor role is filled by lysine 180.

This sequence belongs to the DeoC/FbaB aldolase family. DeoC type 1 subfamily.

It localises to the cytoplasm. The catalysed reaction is 2-deoxy-D-ribose 5-phosphate = D-glyceraldehyde 3-phosphate + acetaldehyde. The protein operates within carbohydrate degradation; 2-deoxy-D-ribose 1-phosphate degradation; D-glyceraldehyde 3-phosphate and acetaldehyde from 2-deoxy-alpha-D-ribose 1-phosphate: step 2/2. Its function is as follows. Catalyzes a reversible aldol reaction between acetaldehyde and D-glyceraldehyde 3-phosphate to generate 2-deoxy-D-ribose 5-phosphate. The protein is Deoxyribose-phosphate aldolase 1 of Staphylococcus aureus (strain MRSA252).